The sequence spans 408 residues: Succinylornithine transaminase (408 aa).

Lys-252 carries the post-translational modification N6-(pyridoxal phosphate)lysine.

This sequence belongs to the class-III pyridoxal-phosphate-dependent aminotransferase family. AstC subfamily. Pyridoxal 5'-phosphate is required as a cofactor.

It carries out the reaction N(2)-succinyl-L-ornithine + 2-oxoglutarate = N-succinyl-L-glutamate 5-semialdehyde + L-glutamate. It functions in the pathway amino-acid degradation; L-arginine degradation via AST pathway; L-glutamate and succinate from L-arginine: step 3/5. Catalyzes the transamination of N(2)-succinylornithine and alpha-ketoglutarate into N(2)-succinylglutamate semialdehyde and glutamate. Can also act as an acetylornithine aminotransferase. The sequence is that of Succinylornithine transaminase from Salmonella enteritidis PT4 (strain P125109).